The sequence spans 990 residues: Serine/threonine-protein phosphatase 6 regulatory ankyrin repeat subunit B (990 aa).

ANK repeat units lie at residues 7–36 (ADQP…DVNA), 40–69 (EKRT…RVNA), 73–102 (MWLT…DVNA), 106–135 (NWQT…SVNV), 139–168 (GGRT…NINA), 172–201 (KDRR…EVTC), 205–234 (KGYT…EIDE), 238–267 (YGNT…NVNQ), 271–301 (NGFT…DVNI), 305–334 (DGKS…EIDC), 338–367 (DGNT…DTAK), 371–400 (HNMF…EIDT), 404–433 (FGRT…DFNK), 437–466 (RGRT…NINE), 470–499 (WGRT…NAEE), 531–560 (EGYN…NMFE), 566–595 (ATKS…DLDI), 599–628 (KGRT…SVTV), 633–662 (TKRT…NPDV), 666–695 (KGQT…SVDA), 699–728 (LGCT…SILC), 732–761 (RGRT…SEED), 768–797 (QGYT…FRKF), 800–829 (NSFS…ASIV), 835–864 (KGRT…QVNA), 868–898 (AGKT…DLTL), 902–931 (DSNT…EQSL), and 938–967 (SLQT…CVLA).

In terms of assembly, protein phosphatase 6 (PP6) holoenzyme is proposed to be a heterotrimeric complex formed by the catalytic subunit, a SAPS domain-containing subunit (PP6R) and an ankyrin repeat-domain containing regulatory subunit (ARS).

Putative regulatory subunit of protein phosphatase 6 (PP6) that may be involved in the recognition of phosphoprotein substrates. The protein is Serine/threonine-protein phosphatase 6 regulatory ankyrin repeat subunit B (ANKRD44) of Gallus gallus (Chicken).